The chain runs to 167 residues: UPF0179 protein Pisl_0688 (167 aa).

It belongs to the UPF0179 family.

The sequence is that of UPF0179 protein Pisl_0688 from Pyrobaculum islandicum (strain DSM 4184 / JCM 9189 / GEO3).